The chain runs to 217 residues: Trimethylamine corrinoid protein (217 aa).

One can recognise a B12-binding N-terminal domain in the interval 1 to 92 (MANKEEIIAK…EMEKRKSQTK (92 aa)). Positions 94–217 (LGTVAIGTIE…VAKVKAALNV (124 aa)) constitute a B12-binding domain. His107 lines the methylcob(III)alamin pocket.

Belongs to the methylamine corrinoid protein family. In terms of assembly, can form a complex with MttB.

Its pathway is one-carbon metabolism; methanogenesis from trimethylamine. Acts probably as a methyl group carrier between MttB and either MtbA or MtaA. In Methanosarcina barkeri, this protein is Trimethylamine corrinoid protein.